Here is a 379-residue protein sequence, read N- to C-terminus: Polycomb group protein FIE2 (379 aa).

WD repeat units lie at residues 85–128, 131–171, 177–217, 243–280, 292–333, and 340–378; these read DKDE…LAKS, GHGD…CILI, GHRN…LYVD, VHSNYVDCTRWLGDFILSKSVDNEIVLWEPKTKEQSPG, VPEC…PVLI, and QCKSPIRQTAVSFDGSTILGAGEDGTIWRWDEVDHPSSR.

The protein belongs to the WD repeat ESC family. Widely expressed. Expressed in the embryo sac before pollination. After pollination, its expression persists, predominantly in the embryo and at lower levels in the endosperm.

The protein resides in the nucleus. Its function is as follows. Polycomb group (PcG) protein. PcG proteins act by forming multiprotein complexes, which are required to maintain the transcriptionally repressive state of homeotic genes throughout development. PcG proteins are not required to initiate repression, but to maintain it during later stages of development. They probably act via the methylation of histones, rendering chromatin heritably changed in its expressibility. The polypeptide is Polycomb group protein FIE2 (FIE2) (Zea mays (Maize)).